Here is a 65-residue protein sequence, read N- to C-terminus: Putative primary metabolism protein prl65 (65 aa).

Residues 1-25 (MTKYSKGNKVEYHPIGGPSGTSTST) form a disordered region.

Functionally, may play a role in primary metabolism. This is Putative primary metabolism protein prl65 from Schizosaccharomyces pombe (strain 972 / ATCC 24843) (Fission yeast).